The sequence spans 515 residues: Anthranilate synthase component 1 (515 aa).

Residues threonine 40 and 291–293 (PYM) contribute to the L-tryptophan site. 328–329 (GT) serves as a coordination point for chorismate. A Mg(2+)-binding site is contributed by glutamate 361. Residues tyrosine 449, arginine 469, 483–485 (GAG), and glycine 485 each bind chorismate. Glutamate 498 contributes to the Mg(2+) binding site.

It belongs to the anthranilate synthase component I family. In terms of assembly, heterotetramer consisting of two non-identical subunits: a beta subunit (TrpG) and a large alpha subunit (TrpE). It depends on Mg(2+) as a cofactor.

It catalyses the reaction chorismate + L-glutamine = anthranilate + pyruvate + L-glutamate + H(+). It functions in the pathway amino-acid biosynthesis; L-tryptophan biosynthesis; L-tryptophan from chorismate: step 1/5. With respect to regulation, feedback inhibited by tryptophan. In terms of biological role, part of a heterotetrameric complex that catalyzes the two-step biosynthesis of anthranilate, an intermediate in the biosynthesis of L-tryptophan. In the first step, the glutamine-binding beta subunit (TrpG) of anthranilate synthase (AS) provides the glutamine amidotransferase activity which generates ammonia as a substrate that, along with chorismate, is used in the second step, catalyzed by the large alpha subunit of AS (TrpE) to produce anthranilate. In the absence of TrpG, TrpE can synthesize anthranilate directly from chorismate and high concentrations of ammonia. This Buchnera aphidicola subsp. Schizaphis graminum (strain Sg) protein is Anthranilate synthase component 1 (trpE).